A 348-amino-acid chain; its full sequence is D-alanine--D-alanine ligase (348 aa).

Positions 132–334 (KRILEVAGVP…YSDLIKELVV (203 aa)) constitute an ATP-grasp domain. 162-217 (LEKLTFPVFVKPANMGSSVGISKAENESELRSAIDLALKYDSRILIEQGVVAREIE) contacts ATP. Mg(2+) contacts are provided by aspartate 288, glutamate 301, and asparagine 303.

It belongs to the D-alanine--D-alanine ligase family. It depends on Mg(2+) as a cofactor. The cofactor is Mn(2+).

It localises to the cytoplasm. It catalyses the reaction 2 D-alanine + ATP = D-alanyl-D-alanine + ADP + phosphate + H(+). It functions in the pathway cell wall biogenesis; peptidoglycan biosynthesis. Cell wall formation. This is D-alanine--D-alanine ligase from Streptococcus thermophilus (strain ATCC BAA-250 / LMG 18311).